The sequence spans 1423 residues: DNA-directed RNA polymerase subunit beta' (1423 aa).

Cys70, Cys72, Cys85, and Cys88 together coordinate Zn(2+). Mg(2+) contacts are provided by Asp461, Asp463, and Asp465. Zn(2+)-binding residues include Cys809, Cys883, Cys890, and Cys893. The segment at 1383–1423 is disordered; the sequence is EEHAAELRQPVQADTGDDPLGAVVGESHGTDADAGDYLTEE.

Belongs to the RNA polymerase beta' chain family. The RNAP catalytic core consists of 2 alpha, 1 beta, 1 beta' and 1 omega subunit. When a sigma factor is associated with the core the holoenzyme is formed, which can initiate transcription. Mg(2+) is required as a cofactor. It depends on Zn(2+) as a cofactor.

It carries out the reaction RNA(n) + a ribonucleoside 5'-triphosphate = RNA(n+1) + diphosphate. DNA-dependent RNA polymerase catalyzes the transcription of DNA into RNA using the four ribonucleoside triphosphates as substrates. The protein is DNA-directed RNA polymerase subunit beta' of Rhizorhabdus wittichii (strain DSM 6014 / CCUG 31198 / JCM 15750 / NBRC 105917 / EY 4224 / RW1) (Sphingomonas wittichii).